Reading from the N-terminus, the 545-residue chain is CTP synthase (545 aa).

Positions 1–265 (MSKYIFVTGG…LVPIAKQLDL (265 aa)) are amidoligase domain. Ser-13 is a CTP binding site. Ser-13 serves as a coordination point for UTP. ATP is bound by residues 14–19 (SLGKGI) and Asp-71. Mg(2+)-binding residues include Asp-71 and Glu-139. CTP contacts are provided by residues 146–148 (DIE), 186–191 (KTKPTQ), and Lys-222. Residues 186-191 (KTKPTQ) and Lys-222 contribute to the UTP site. Residues 290–544 (KIAFVGKYLQ…VENAYKCQRS (255 aa)) enclose the Glutamine amidotransferase type-1 domain. Gly-355 contacts L-glutamine. Catalysis depends on Cys-382, which acts as the Nucleophile; for glutamine hydrolysis. L-glutamine is bound by residues 383–386 (LGMQ), Glu-406, and Arg-473. Residues His-517 and Glu-519 contribute to the active site.

Belongs to the CTP synthase family. Homotetramer.

It carries out the reaction UTP + L-glutamine + ATP + H2O = CTP + L-glutamate + ADP + phosphate + 2 H(+). It catalyses the reaction L-glutamine + H2O = L-glutamate + NH4(+). The enzyme catalyses UTP + NH4(+) + ATP = CTP + ADP + phosphate + 2 H(+). It participates in pyrimidine metabolism; CTP biosynthesis via de novo pathway; CTP from UDP: step 2/2. Allosterically activated by GTP, when glutamine is the substrate; GTP has no effect on the reaction when ammonia is the substrate. The allosteric effector GTP functions by stabilizing the protein conformation that binds the tetrahedral intermediate(s) formed during glutamine hydrolysis. Inhibited by the product CTP, via allosteric rather than competitive inhibition. Its function is as follows. Catalyzes the ATP-dependent amination of UTP to CTP with either L-glutamine or ammonia as the source of nitrogen. Regulates intracellular CTP levels through interactions with the four ribonucleotide triphosphates. The sequence is that of CTP synthase from Nautilia profundicola (strain ATCC BAA-1463 / DSM 18972 / AmH).